Consider the following 119-residue polypeptide: Large ribosomal subunit protein uL18 (119 aa).

Belongs to the universal ribosomal protein uL18 family. Part of the 50S ribosomal subunit; part of the 5S rRNA/L5/L18/L25 subcomplex. Contacts the 5S and 23S rRNAs.

In terms of biological role, this is one of the proteins that bind and probably mediate the attachment of the 5S RNA into the large ribosomal subunit, where it forms part of the central protuberance. The sequence is that of Large ribosomal subunit protein uL18 from Nitratidesulfovibrio vulgaris (strain DP4) (Desulfovibrio vulgaris).